Reading from the N-terminus, the 151-residue chain is Nucleoside diphosphate kinase (151 aa).

ATP contacts are provided by lysine 11, phenylalanine 59, arginine 87, arginine 104, and asparagine 114. Histidine 117 (pros-phosphohistidine intermediate) is an active-site residue.

This sequence belongs to the NDK family. As to quaternary structure, homotrimer. Mg(2+) is required as a cofactor.

The enzyme catalyses a 2'-deoxyribonucleoside 5'-diphosphate + ATP = a 2'-deoxyribonucleoside 5'-triphosphate + ADP. The catalysed reaction is a ribonucleoside 5'-diphosphate + ATP = a ribonucleoside 5'-triphosphate + ADP. Major role in the synthesis of nucleoside triphosphates other than ATP. The ATP gamma phosphate is transferred to the NDP beta phosphate via a ping-pong mechanism, using a phosphorylated active-site intermediate. In Schizosaccharomyces pombe (strain 972 / ATCC 24843) (Fission yeast), this protein is Nucleoside diphosphate kinase (ndk1).